Consider the following 474-residue polypeptide: 3-isopropylmalate dehydratase large subunit (474 aa).

Residues Cys353, Cys414, and Cys417 each coordinate [4Fe-4S] cluster.

This sequence belongs to the aconitase/IPM isomerase family. LeuC type 1 subfamily. As to quaternary structure, heterodimer of LeuC and LeuD. [4Fe-4S] cluster serves as cofactor.

It catalyses the reaction (2R,3S)-3-isopropylmalate = (2S)-2-isopropylmalate. Its pathway is amino-acid biosynthesis; L-leucine biosynthesis; L-leucine from 3-methyl-2-oxobutanoate: step 2/4. In terms of biological role, catalyzes the isomerization between 2-isopropylmalate and 3-isopropylmalate, via the formation of 2-isopropylmaleate. The sequence is that of 3-isopropylmalate dehydratase large subunit from Pseudomonas aeruginosa (strain LESB58).